A 491-amino-acid chain; its full sequence is Subtilase-type proteinase RRT12 (491 aa).

The signal sequence occupies residues methionine 1–alanine 17. N-linked (GlcNAc...) asparagine glycans are attached at residues asparagine 38, asparagine 64, asparagine 106, and asparagine 121. Residues proline 142 to alanine 442 form the Peptidase S8 domain. Residues aspartate 174 and histidine 205 each act as charge relay system in the active site. N-linked (GlcNAc...) asparagine glycans are attached at residues asparagine 268 and asparagine 356. The active-site Charge relay system is the serine 365. Residue asparagine 449 is glycosylated (N-linked (GlcNAc...) asparagine).

The protein belongs to the peptidase S8 family. In terms of processing, N-glycosylated.

The protein resides in the spore wall. Subtilisin-related protease involved in the formation of a protective dityrosine layer required for spore wall assembly. Identified in a screen for mutants with increased levels of rDNA transcription. In Saccharomyces cerevisiae (strain ATCC 204508 / S288c) (Baker's yeast), this protein is Subtilase-type proteinase RRT12 (RRT12).